The primary structure comprises 92 residues: YcgL domain-containing protein Sputcn32_1766 (92 aa).

The 85-residue stretch at 1 to 85 (MLCTVYKSTR…PQVNLLAEHK (85 aa)) folds into the YcgL domain.

This is YcgL domain-containing protein Sputcn32_1766 from Shewanella putrefaciens (strain CN-32 / ATCC BAA-453).